The primary structure comprises 215 residues: Cytochrome b6 (215 aa).

The helical transmembrane segment at 32 to 52 threads the bilayer; sequence IFYCLGGITLTCFLVQVATGF. Cys-35 provides a ligand contact to heme c. Heme b contacts are provided by His-86 and His-100. 3 helical membrane-spanning segments follow: residues 90 to 110, 116 to 136, and 186 to 206; these read ASMMVLMMILHIFRVYLTGGF, LTWVTGVILAVLTVSFGVTGY, and LHTFVLPLLTAIFMLMHFLMI. Heme b is bound by residues His-187 and His-202.

The protein belongs to the cytochrome b family. PetB subfamily. In terms of assembly, the 4 large subunits of the cytochrome b6-f complex are cytochrome b6, subunit IV (17 kDa polypeptide, PetD), cytochrome f and the Rieske protein, while the 4 small subunits are PetG, PetL, PetM and PetN. The complex functions as a dimer. The cofactor is heme b. It depends on heme c as a cofactor.

Its subcellular location is the plastid. The protein resides in the chloroplast thylakoid membrane. Functionally, component of the cytochrome b6-f complex, which mediates electron transfer between photosystem II (PSII) and photosystem I (PSI), cyclic electron flow around PSI, and state transitions. This Marchantia polymorpha (Common liverwort) protein is Cytochrome b6.